We begin with the raw amino-acid sequence, 125 residues long: S-adenosylmethionine decarboxylase proenzyme (125 aa).

The Schiff-base intermediate with substrate; via pyruvic acid role is filled by Ser-71. Ser-71 bears the Pyruvic acid (Ser); by autocatalysis mark. The active-site Proton acceptor; for processing activity is His-76. The Proton donor; for catalytic activity role is filled by Cys-91.

The protein belongs to the prokaryotic AdoMetDC family. Type 1 subfamily. As to quaternary structure, heterotetramer of two alpha and two beta chains arranged as a dimer of alpha/beta heterodimers. It depends on pyruvate as a cofactor. Post-translationally, is synthesized initially as an inactive proenzyme. Formation of the active enzyme involves a self-maturation process in which the active site pyruvoyl group is generated from an internal serine residue via an autocatalytic post-translational modification. Two non-identical subunits are generated from the proenzyme in this reaction, and the pyruvate is formed at the N-terminus of the alpha chain, which is derived from the carboxyl end of the proenzyme. The post-translation cleavage follows an unusual pathway, termed non-hydrolytic serinolysis, in which the side chain hydroxyl group of the serine supplies its oxygen atom to form the C-terminus of the beta chain, while the remainder of the serine residue undergoes an oxidative deamination to produce ammonia and the pyruvoyl group blocking the N-terminus of the alpha chain.

The enzyme catalyses S-adenosyl-L-methionine + H(+) = S-adenosyl 3-(methylsulfanyl)propylamine + CO2. The protein operates within amine and polyamine biosynthesis; S-adenosylmethioninamine biosynthesis; S-adenosylmethioninamine from S-adenosyl-L-methionine: step 1/1. Its function is as follows. Catalyzes the decarboxylation of S-adenosylmethionine to S-adenosylmethioninamine (dcAdoMet), the propylamine donor required for the synthesis of the polyamines spermine and spermidine from the diamine putrescine. This chain is S-adenosylmethionine decarboxylase proenzyme, found in Pyrobaculum islandicum (strain DSM 4184 / JCM 9189 / GEO3).